The chain runs to 342 residues: Ribosomal RNA small subunit methyltransferase H (342 aa).

S-adenosyl-L-methionine contacts are provided by residues 36-38, Asp56, Phe82, Asp100, and Gln107; that span reads GGH. The tract at residues 311–342 is disordered; the sequence is GESGMGKGNSAAASRFPTADSPFPASANGDAA.

Belongs to the methyltransferase superfamily. RsmH family.

The protein localises to the cytoplasm. The catalysed reaction is cytidine(1402) in 16S rRNA + S-adenosyl-L-methionine = N(4)-methylcytidine(1402) in 16S rRNA + S-adenosyl-L-homocysteine + H(+). Functionally, specifically methylates the N4 position of cytidine in position 1402 (C1402) of 16S rRNA. The sequence is that of Ribosomal RNA small subunit methyltransferase H from Xanthomonas axonopodis pv. citri (strain 306).